Consider the following 558-residue polypeptide: MAELNTHVNIKEKIYAVRSVVPNKSNNEIVLVLQQFDFNVDKAVQAFVDGSAIQVLKEWNMTGKKKNNKRKRSKSKQHQGNKDAKDKVERPEVGPLQPQAPLVQNGHMNGCEKDSSSPDSTREKLALTPREKKISILEEPPRAQRGVTEGGRLLQQKMSLDGNPRAIHGPSERSDGPQWSAGQPCNPSKPKAKTSPVKSNAPAAHLEIKPDELAKKRGPNIEKSVKDLQRCTVSLTRYRVMIKEEVDSSVKKIKAAFAELHNCIIDKEVSLMAEMDKVKEEAMDILTARQKKAEELKRLTDLASQMAEMQLAELRAEIKHFVSERKYDEELGKAARFSCDIEQLKAQILICGEITHPKNSYSSRTPCSSLLPLLNTHAVASGKQGNFARKSSGHNKPSEGKAANPKMVSGLANTADACHQTMPTNKQQNGPSSQRRRFNPQYHNRLNGPAKSQGGGNEADPMAKSNSRHEHRRQPHNGFRPKNKGGAKNQEAPLGTKAPEAPPHSEKARRRQHAADNLEARPFRGNVSRVSQCNLCPSRIEVSTEATVLSVPAVTLVA.

Ala-2 is subject to N-acetylalanine. The span at 63 to 79 (GKKKNNKRKRSKSKQHQ) shows a compositional bias: basic residues. Positions 63–204 (GKKKNNKRKR…SPVKSNAPAA (142 aa)) are disordered. 2 stretches are compositionally biased toward basic and acidic residues: residues 80–92 (GNKDAKDKVERPE) and 110–142 (GCEKDSSSPDSTREKLALTPREKKISILEEPPR). Ser-120 carries the post-translational modification Phosphoserine. The stretch at 279 to 344 (KEEAMDILTA…ARFSCDIEQL (66 aa)) forms a coiled coil. 2 disordered regions span residues 385-406 (GNFARKSSGHNKPSEGKAANPK) and 421-514 (TMPT…RQHA). The segment covering 421–433 (TMPTNKQQNGPSS) has biased composition (polar residues). The span at 469–485 (HEHRRQPHNGFRPKNKG) shows a compositional bias: basic residues.

It belongs to the SPATS2 family.

The protein localises to the cytoplasm. It is found in the nucleus. It localises to the nucleolus. The sequence is that of SPATS2-like protein (Spats2l) from Mus musculus (Mouse).